Here is a 204-residue protein sequence, read N- to C-terminus: General stress protein Ctc (204 aa).

Residues 177-204 (ILPPQQQEAAEVDEEESADAQPEGENEQ) are disordered. Over residues 186–204 (AEVDEEESADAQPEGENEQ) the composition is skewed to acidic residues.

Belongs to the bacterial ribosomal protein bL25 family. CTC subfamily. As to quaternary structure, part of the ribosome (presumably the 50S subunit) under heat-stress but not control growth conditions. Binds 5S rRNA.

Its function is as follows. Not required for exponential growth; probably functions in vegetatively growing cells, maybe required for accurate translation under stress conditions. The polypeptide is General stress protein Ctc (Bacillus subtilis (strain 168)).